Here is a 375-residue protein sequence, read N- to C-terminus: DNA replication and repair protein RecF (375 aa).

30–37 (GNNGSGKS) is a binding site for ATP.

This sequence belongs to the RecF family.

It is found in the cytoplasm. Its function is as follows. The RecF protein is involved in DNA metabolism; it is required for DNA replication and normal SOS inducibility. RecF binds preferentially to single-stranded, linear DNA. It also seems to bind ATP. The protein is DNA replication and repair protein RecF of Hahella chejuensis (strain KCTC 2396).